Consider the following 353-residue polypeptide: Inositol 3-kinase (353 aa).

ATP is bound by residues Ser-197, 247–250 (GAGD), and Asn-274. Asp-250 functions as the Proton acceptor in the catalytic mechanism.

Belongs to the carbohydrate kinase pfkB family.

It carries out the reaction myo-inositol + ATP = 1D-myo-inositol 3-phosphate + ADP + H(+). Functionally, kinase that phosphorylates myo-inositol to produce multiple myo-inositol monophosphates. Participates in phytic acid biosynthesis in developing seeds. Phytic acid is the primary storage form of phosphorus in cereal grains and other plant seeds. The polypeptide is Inositol 3-kinase (Arabidopsis thaliana (Mouse-ear cress)).